A 217-amino-acid polypeptide reads, in one-letter code: Uracil-DNA glycosylase (217 aa).

The active-site Proton acceptor is aspartate 62.

Belongs to the uracil-DNA glycosylase (UDG) superfamily. UNG family.

The protein localises to the cytoplasm. The enzyme catalyses Hydrolyzes single-stranded DNA or mismatched double-stranded DNA and polynucleotides, releasing free uracil.. Its function is as follows. Excises uracil residues from the DNA which can arise as a result of misincorporation of dUMP residues by DNA polymerase or due to deamination of cytosine. The protein is Uracil-DNA glycosylase of Streptococcus suis (strain 98HAH33).